The sequence spans 353 residues: tRNA-specific 2-thiouridylase MnmA (353 aa).

ATP-binding positions include 7 to 14 (GLSGGVDS) and Leu-33. Cys-94 acts as the Nucleophile in catalysis. Cys-94 and Cys-193 are disulfide-bonded. Gly-119 is an ATP binding site. Positions 143-145 (KDQ) are interaction with tRNA. Cys-193 serves as the catalytic Cysteine persulfide intermediate. The tract at residues 298-299 (RY) is interaction with tRNA.

This sequence belongs to the MnmA/TRMU family.

The protein localises to the cytoplasm. The enzyme catalyses S-sulfanyl-L-cysteinyl-[protein] + uridine(34) in tRNA + AH2 + ATP = 2-thiouridine(34) in tRNA + L-cysteinyl-[protein] + A + AMP + diphosphate + H(+). In terms of biological role, catalyzes the 2-thiolation of uridine at the wobble position (U34) of tRNA, leading to the formation of s(2)U34. The sequence is that of tRNA-specific 2-thiouridylase MnmA from Picosynechococcus sp. (strain ATCC 27264 / PCC 7002 / PR-6) (Agmenellum quadruplicatum).